Reading from the N-terminus, the 334-residue chain is Anthranilate phosphoribosyltransferase (334 aa).

Residues glycine 81, 84–85 (GD), threonine 89, 91–94 (NIST), 109–117 (KHGSRSVSS), and alanine 121 each bind 5-phospho-alpha-D-ribose 1-diphosphate. Glycine 81 is an anthranilate binding site. Serine 93 provides a ligand contact to Mg(2+). Position 167 (arginine 167) interacts with anthranilate. Mg(2+) contacts are provided by aspartate 225 and glutamate 226.

Belongs to the anthranilate phosphoribosyltransferase family. Homodimer. Mg(2+) serves as cofactor.

The enzyme catalyses N-(5-phospho-beta-D-ribosyl)anthranilate + diphosphate = 5-phospho-alpha-D-ribose 1-diphosphate + anthranilate. It functions in the pathway amino-acid biosynthesis; L-tryptophan biosynthesis; L-tryptophan from chorismate: step 2/5. Catalyzes the transfer of the phosphoribosyl group of 5-phosphorylribose-1-pyrophosphate (PRPP) to anthranilate to yield N-(5'-phosphoribosyl)-anthranilate (PRA). The sequence is that of Anthranilate phosphoribosyltransferase from Actinobacillus pleuropneumoniae serotype 7 (strain AP76).